The primary structure comprises 266 residues: Stomatin homolog PH1511 (266 aa).

The chain crosses the membrane as a helical span at residues 7 to 27 (FFVTSIILLFILIFLASAIKI). Coiled-coil stretches lie at residues 125-152 (GQAH…EATD) and 178-213 (RQAE…ISEH).

It belongs to the band 7/mec-2 family. As to quaternary structure, homotrimer. Interacts with PH1510 and is cleaved by PH1510.

Its subcellular location is the membrane. The protein is Stomatin homolog PH1511 of Pyrococcus horikoshii (strain ATCC 700860 / DSM 12428 / JCM 9974 / NBRC 100139 / OT-3).